The following is a 282-amino-acid chain: Pantothenate synthetase (282 aa).

30-37 (MGNLHLGH) contributes to the ATP binding site. Histidine 37 acts as the Proton donor in catalysis. Glutamine 61 serves as a coordination point for (R)-pantoate. Glutamine 61 serves as a coordination point for beta-alanine. 149-152 (GQKD) contributes to the ATP binding site. Glutamine 155 is a (R)-pantoate binding site. ATP contacts are provided by residues isoleucine 178 and 186–189 (MSSR).

The protein belongs to the pantothenate synthetase family. As to quaternary structure, homodimer.

It is found in the cytoplasm. It catalyses the reaction (R)-pantoate + beta-alanine + ATP = (R)-pantothenate + AMP + diphosphate + H(+). It participates in cofactor biosynthesis; (R)-pantothenate biosynthesis; (R)-pantothenate from (R)-pantoate and beta-alanine: step 1/1. Catalyzes the condensation of pantoate with beta-alanine in an ATP-dependent reaction via a pantoyl-adenylate intermediate. The chain is Pantothenate synthetase from Shewanella piezotolerans (strain WP3 / JCM 13877).